The following is a 204-amino-acid chain: ATP-dependent Clp protease proteolytic subunit (204 aa).

Residue S102 is the Nucleophile of the active site. Residue H127 is part of the active site.

The protein belongs to the peptidase S14 family. In terms of assembly, fourteen ClpP subunits assemble into 2 heptameric rings which stack back to back to give a disk-like structure with a central cavity, resembling the structure of eukaryotic proteasomes.

The protein localises to the cytoplasm. It catalyses the reaction Hydrolysis of proteins to small peptides in the presence of ATP and magnesium. alpha-casein is the usual test substrate. In the absence of ATP, only oligopeptides shorter than five residues are hydrolyzed (such as succinyl-Leu-Tyr-|-NHMec, and Leu-Tyr-Leu-|-Tyr-Trp, in which cleavage of the -Tyr-|-Leu- and -Tyr-|-Trp bonds also occurs).. Functionally, cleaves peptides in various proteins in a process that requires ATP hydrolysis. Has a chymotrypsin-like activity. Plays a major role in the degradation of misfolded proteins. This is ATP-dependent Clp protease proteolytic subunit from Neisseria gonorrhoeae (strain ATCC 700825 / FA 1090).